Consider the following 656-residue polypeptide: Chaperone protein HtpG (656 aa).

The segment at 1 to 364 (MSEQNPTDSK…SADLPLNVSR (364 aa)) is a; substrate-binding. A b region spans residues 365–583 (EILQESRDVK…EGELSPQMIQ (219 aa)). The segment at 584–656 (MLKQMGQDVP…LRRVNELLMK (73 aa)) is c.

This sequence belongs to the heat shock protein 90 family. As to quaternary structure, homodimer.

It is found in the cytoplasm. Its function is as follows. Molecular chaperone. Has ATPase activity. The polypeptide is Chaperone protein HtpG (Psychrobacter arcticus (strain DSM 17307 / VKM B-2377 / 273-4)).